The sequence spans 79 residues: Raniseptin-3 (79 aa).

Positions 1–22 (MAFLKKSLFLVLFLGIVSLSIC) are cleaved as a signal peptide. A propeptide spanning residues 23 to 49 (EEEKREGEEEEKQEEENEELSEEELRE) is cleaved from the precursor.

It belongs to the frog skin active peptide (FSAP) family. Dermaseptin subfamily. As to expression, expressed by the skin glands.

The protein resides in the secreted. Its function is as follows. Has antibacterial activity. This chain is Raniseptin-3, found in Boana raniceps (Chaco tree frog).